The primary structure comprises 1104 residues: Mitogen-activated protein kinase kinase kinase 9 (1104 aa).

Positions 12-22 (ASAAAAAPPGE) are enriched in low complexity. A disordered region spans residues 12–47 (ASAAAAAPPGEDGAGAGAEEEEEEEEEAAAAVGPGE). Residues 29-39 (AEEEEEEEEEA) show a composition bias toward acidic residues. Positions 52-116 (APLPYWTAVF…PSNYVTPRSA (65 aa)) constitute an SH3 domain. Residues 144–412 (LTLEEIIGIG…LTTIEESGFF (269 aa)) form the Protein kinase domain. Residues 150-158 (IGIGGFGKV) and lysine 171 each bind ATP. Aspartate 268 acts as the Proton acceptor in catalysis. Phosphothreonine; by autocatalysis is present on residues threonine 304 and threonine 305. Serine 308 bears the Phosphoserine; by autocatalysis mark. Threonine 312 is subject to Phosphothreonine; by autocatalysis. 2 leucine-zipper regions span residues 430 to 451 (IQEM…EEEL) and 465 to 486 (LRRR…ELNI). 4 disordered regions span residues 532–636 (ASPT…PHFH), 675–742 (MEDE…LKRG), 781–819 (EEPE…FKKE), and 890–1038 (RDPN…CFAS). Phosphoserine is present on serine 533. Composition is skewed to polar residues over residues 566–575 (PGESSKTWGR) and 723–739 (PVNS…TNSL). The span at 785–797 (PPAREEKKRREGL) shows a compositional bias: basic and acidic residues. Over residues 893–910 (NQSLTPTHVTLTTPSQPS) the composition is skewed to polar residues. The segment covering 929-944 (SRSPSSNGLSPSPGAG) has biased composition (low complexity). The span at 1014-1038 (HARSTSPANSSSTETPSNLDSCFAS) shows a compositional bias: polar residues.

The protein belongs to the protein kinase superfamily. STE Ser/Thr protein kinase family. MAP kinase kinase kinase subfamily. In terms of assembly, homodimer. It depends on Mg(2+) as a cofactor. Post-translationally, autophosphorylation on serine and threonine residues within the activation loop plays a role in enzyme activation. Thr-312 is likely to be the main autophosphorylation site. Autophosphorylation also occurs on Thr-304 and Ser-308. In terms of tissue distribution, expressed in epithelial tumor cell lines of colonic, breast and esophageal origin.

The catalysed reaction is L-seryl-[protein] + ATP = O-phospho-L-seryl-[protein] + ADP + H(+). It carries out the reaction L-threonyl-[protein] + ATP = O-phospho-L-threonyl-[protein] + ADP + H(+). Its activity is regulated as follows. Homodimerization via the leucine zipper domains is required for autophosphorylation of multiple sites in the activation loop and subsequent activation. Autophosphorylation at Thr-312 is the key step in activation of MAP3K9/MLK1 and is required for full phosphorylation. Autophosphorylation at Thr-304 and Ser-308 have been shown to be of secondary importance in the activation of MAP3K9/MLK1. CEP-1347 and many indolocarbazole analogs have been shown to act as inhibitors of MAP3K9/MLK1 activity. Serine/threonine kinase which acts as an essential component of the MAP kinase signal transduction pathway. Plays an important role in the cascades of cellular responses evoked by changes in the environment. Once activated, acts as an upstream activator of the MKK/JNK signal transduction cascade through the phosphorylation of MAP2K4/MKK4 and MAP2K7/MKK7 which in turn activate the JNKs. The MKK/JNK signaling pathway regulates stress response via activator protein-1 (JUN) and GATA4 transcription factors. Also plays a role in mitochondrial death signaling pathway, including the release cytochrome c, leading to apoptosis. The polypeptide is Mitogen-activated protein kinase kinase kinase 9 (MAP3K9) (Homo sapiens (Human)).